Here is a 310-residue protein sequence, read N- to C-terminus: Alpha/beta hydrolase domain-containing protein 17A (310 aa).

Residues S190, D255, and H284 each act as charge relay system in the active site. S307 carries the phosphoserine modification.

The protein belongs to the AB hydrolase superfamily. ABHD17 family. In terms of processing, palmitoylated on cysteine residues located in a cysteine cluster at the N-terminus which promotes membrane localization. Palmitoylation is required for post-synaptic localization and for depalmitoylating activity towards DLG4/PSD95.

The protein resides in the cell membrane. It localises to the endosome membrane. The protein localises to the cell projection. It is found in the dendritic spine. Its subcellular location is the postsynaptic density membrane. It catalyses the reaction S-hexadecanoyl-L-cysteinyl-[protein] + H2O = L-cysteinyl-[protein] + hexadecanoate + H(+). Functionally, hydrolyzes fatty acids from S-acylated cysteine residues in proteins. Has depalmitoylating activity towards NRAS. Has depalmitoylating activity towards DLG4/PSD95. May have depalmitoylating activity towards MAP6. In Bos taurus (Bovine), this protein is Alpha/beta hydrolase domain-containing protein 17A.